The primary structure comprises 1358 residues: DNA-directed RNA polymerase subunit beta (1358 aa).

Belongs to the RNA polymerase beta chain family. As to quaternary structure, the RNAP catalytic core consists of 2 alpha, 1 beta, 1 beta' and 1 omega subunit. When a sigma factor is associated with the core the holoenzyme is formed, which can initiate transcription.

It carries out the reaction RNA(n) + a ribonucleoside 5'-triphosphate = RNA(n+1) + diphosphate. In terms of biological role, DNA-dependent RNA polymerase catalyzes the transcription of DNA into RNA using the four ribonucleoside triphosphates as substrates. This is DNA-directed RNA polymerase subunit beta from Xanthobacter autotrophicus (strain ATCC BAA-1158 / Py2).